The following is a 689-amino-acid chain: Glycine--tRNA ligase beta subunit (689 aa).

The protein belongs to the class-II aminoacyl-tRNA synthetase family. In terms of assembly, tetramer of two alpha and two beta subunits.

Its subcellular location is the cytoplasm. It carries out the reaction tRNA(Gly) + glycine + ATP = glycyl-tRNA(Gly) + AMP + diphosphate. This chain is Glycine--tRNA ligase beta subunit, found in Mannheimia succiniciproducens (strain KCTC 0769BP / MBEL55E).